The following is a 201-amino-acid chain: MNGSPSAMKGTTTVGVVCRDGVVLAADRRATLGNMVTSKEVTKVFQIDDHLAIAGAGLVGDILSLVRLLRAEAKLYRAKVGREMSVKALATLVSNVLHGSRHLPYFAWFLIGGYDVKPRLYSIDAAGGVTEERFIAAGSGMEFALALLEENFSDGMGLDEGIDLAVRAVKAAIRRDVYTGEGVTVVAITKEGYRELEPVLK.

A propeptide spans 1-10 (MNGSPSAMKG) (removed in mature form; by autocatalysis). T11 (nucleophile) is an active-site residue.

Belongs to the peptidase T1B family. The 20S proteasome core is composed of 14 alpha and 14 beta subunits that assemble into four stacked heptameric rings, resulting in a barrel-shaped structure. The two inner rings, each composed of seven catalytic beta subunits, are sandwiched by two outer rings, each composed of seven alpha subunits. The catalytic chamber with the active sites is on the inside of the barrel. Has a gated structure, the ends of the cylinder being occluded by the N-termini of the alpha-subunits. Is capped at one or both ends by the proteasome regulatory ATPase, PAN.

It localises to the cytoplasm. The catalysed reaction is Cleavage of peptide bonds with very broad specificity.. Its activity is regulated as follows. The formation of the proteasomal ATPase PAN-20S proteasome complex, via the docking of the C-termini of PAN into the intersubunit pockets in the alpha-rings, triggers opening of the gate for substrate entry. Interconversion between the open-gate and close-gate conformations leads to a dynamic regulation of the 20S proteasome proteolysis activity. Its function is as follows. Component of the proteasome core, a large protease complex with broad specificity involved in protein degradation. This chain is Proteasome subunit beta 1, found in Thermococcus gammatolerans (strain DSM 15229 / JCM 11827 / EJ3).